Reading from the N-terminus, the 660-residue chain is Rhamnogalacturonate lyase B (660 aa).

The first 18 residues, 1–18, serve as a signal peptide directing secretion; sequence MRLGVCFSLAAAASVARA. N-linked (GlcNAc...) asparagine glycans are attached at residues Asn25, Asn109, Asn142, and Asn284. The interval 446–466 is disordered; that stretch reads RLGTPDKSSGEFRHGAARDPT. The segment covering 453 to 466 has biased composition (basic and acidic residues); that stretch reads SSGEFRHGAARDPT. Asn524, Asn566, and Asn635 each carry an N-linked (GlcNAc...) asparagine glycan.

This sequence belongs to the polysaccharide lyase 4 family.

The protein localises to the secreted. The catalysed reaction is Endotype eliminative cleavage of L-alpha-rhamnopyranosyl-(1-&gt;4)-alpha-D-galactopyranosyluronic acid bonds of rhamnogalacturonan I domains in ramified hairy regions of pectin leaving L-rhamnopyranose at the reducing end and 4-deoxy-4,5-unsaturated D-galactopyranosyluronic acid at the non-reducing end.. Functionally, pectinolytic enzymes consist of four classes of enzymes: pectin lyase, polygalacturonase, pectin methylesterase and rhamnogalacturonase. Degrades the rhamnogalacturonan I (RG-I) backbone of pectin. Active against linseed rhamnogalacturonan. This Emericella nidulans (strain FGSC A4 / ATCC 38163 / CBS 112.46 / NRRL 194 / M139) (Aspergillus nidulans) protein is Rhamnogalacturonate lyase B (rglB).